A 117-amino-acid chain; its full sequence is Putative membrane protein insertion efficiency factor (117 aa).

It belongs to the UPF0161 family.

The protein resides in the cell inner membrane. Could be involved in insertion of integral membrane proteins into the membrane. This Helicobacter pylori (strain ATCC 700392 / 26695) (Campylobacter pylori) protein is Putative membrane protein insertion efficiency factor.